Reading from the N-terminus, the 240-residue chain is Urease accessory protein UreD (240 aa).

It belongs to the UreD family. As to quaternary structure, ureD, UreF and UreG form a complex that acts as a GTP-hydrolysis-dependent molecular chaperone, activating the urease apoprotein by helping to assemble the nickel containing metallocenter of UreC. The UreE protein probably delivers the nickel.

It localises to the cytoplasm. Its function is as follows. Required for maturation of urease via the functional incorporation of the urease nickel metallocenter. In Granulibacter bethesdensis (strain ATCC BAA-1260 / CGDNIH1), this protein is Urease accessory protein UreD.